The sequence spans 636 residues: Chaperone protein DnaK (636 aa).

Position 198 is a phosphothreonine; by autocatalysis (Thr198). The disordered stretch occupies residues 598 to 636 (YAAKEQPGEHGETGSGEQARKESGKDENVVDADFEEVKK). A compositionally biased stretch (basic and acidic residues) spans 603 to 625 (QPGEHGETGSGEQARKESGKDEN). Residues 626–636 (VVDADFEEVKK) show a composition bias toward acidic residues.

It belongs to the heat shock protein 70 family.

Its function is as follows. Acts as a chaperone. The sequence is that of Chaperone protein DnaK from Pelobacter propionicus (strain DSM 2379 / NBRC 103807 / OttBd1).